Consider the following 309-residue polypeptide: Mitochondrial glycine transporter (309 aa).

Solcar repeat units lie at residues 2-94 (SNVG…LRAL), 124-207 (LTSQ…IKHE), and 219-304 (QATL…GLML). Transmembrane regions (helical) follow at residues 8 to 33 (LLSGGLSGLATTVCLQPFDLLKTRLQ), 69 to 95 (GTTPSLVRNVPGVALYMTSLTQLRALM), 130 to 155 (LIAGATTRVGVGFLLNPFSVLKARFE), 182 to 205 (GFLASSLRDAPYAGLFVVFYEGIK), 223 to 249 (IHGLSAASAGAIATMATHPFDVIKTKI), and 279 to 297 (GASLRMSRKVLSSAIGWAV).

The protein belongs to the mitochondrial carrier (TC 2.A.29) family. SLC25A38 subfamily.

The protein localises to the mitochondrion inner membrane. The catalysed reaction is glycine(in) = glycine(out). Its function is as follows. Mitochondrial glycine transporter that imports glycine into the mitochondrial matrix. Plays an important role in providing glycine for the first enzymatic step in heme biosynthesis, the condensation of glycine with succinyl-CoA to produce 5-aminolevulinate (ALA) in the mitochondrial matrix. This is Mitochondrial glycine transporter from Laccaria bicolor (strain S238N-H82 / ATCC MYA-4686) (Bicoloured deceiver).